The sequence spans 246 residues: Zinc import ATP-binding protein ZnuC (246 aa).

Positions 24–244 constitute an ABC transporter domain; that stretch reads LKIENLALAY…TLGEIFSSYI (221 aa). An ATP-binding site is contributed by 56–63; it reads GPNGGGKT.

It belongs to the ABC transporter superfamily. Zinc importer (TC 3.A.1.15.5) family. The complex is composed of two ATP-binding proteins (ZnuC), two transmembrane proteins (ZnuB) and a solute-binding protein (ZnuA).

The protein resides in the cell membrane. The catalysed reaction is Zn(2+)(out) + ATP(in) + H2O(in) = Zn(2+)(in) + ADP(in) + phosphate(in) + H(+)(in). Its function is as follows. Part of the ABC transporter complex ZnuABC involved in zinc import. Responsible for energy coupling to the transport system. The chain is Zinc import ATP-binding protein ZnuC from Wolbachia sp. subsp. Brugia malayi (strain TRS).